The primary structure comprises 158 residues: NADH-quinone oxidoreductase subunit B 1 (158 aa).

The [4Fe-4S] cluster site is built by Cys-37, Cys-38, Cys-102, and Cys-132.

The protein belongs to the complex I 20 kDa subunit family. NDH-1 is composed of 14 different subunits. Subunits NuoB, C, D, E, F, and G constitute the peripheral sector of the complex. It depends on [4Fe-4S] cluster as a cofactor.

The protein localises to the cell inner membrane. It carries out the reaction a quinone + NADH + 5 H(+)(in) = a quinol + NAD(+) + 4 H(+)(out). Its function is as follows. NDH-1 shuttles electrons from NADH, via FMN and iron-sulfur (Fe-S) centers, to quinones in the respiratory chain. Couples the redox reaction to proton translocation (for every two electrons transferred, four hydrogen ions are translocated across the cytoplasmic membrane), and thus conserves the redox energy in a proton gradient. This chain is NADH-quinone oxidoreductase subunit B 1, found in Chromobacterium violaceum (strain ATCC 12472 / DSM 30191 / JCM 1249 / CCUG 213 / NBRC 12614 / NCIMB 9131 / NCTC 9757 / MK).